Consider the following 103-residue polypeptide: Heme-copper oxidase subunit 4 (103 aa).

The next 3 helical transmembrane spans lie at 20 to 40, 42 to 62, and 75 to 95; these read VWIV…EGIA, NPFV…ALFF, and ITVS…TSVL.

It localises to the cell membrane. The protein is Heme-copper oxidase subunit 4 (aoxC) of Aeropyrum pernix (strain ATCC 700893 / DSM 11879 / JCM 9820 / NBRC 100138 / K1).